Reading from the N-terminus, the 287-residue chain is X-box-binding protein 1 (287 aa).

Residues Glu61 to Leu117 form the bZIP domain. Residues Lys63–Ala87 form a disordered region. Residues Lys63–Lys88 are basic motif. The segment covering Ala78–Ala87 has biased composition (basic and acidic residues). The segment at Ile89–Leu117 is leucine-zipper.

As to quaternary structure, interacts with SUMO-conjugating enzyme ubc-9; the interaction is direct. In terms of processing, sumoylated. Sumoylation may negatively modulate the transcription of genes involved in the ER-stress-response.

The protein resides in the nucleus. Required for transcriptional regulation of the unfolded protein response (UPR) in the endoplasmic reticulum (ER) under stressed conditions, acting downstream of ire-1, and also maintaining ER homeostasis via a negative feedback loop, in parallel with ER kinase pek-1. May also regulate Golgi protein trafficking distal to the ER. Protects the host organism from the detrimental effects of mounting an innate immune response to microbes, such as the Gram-negative bacterium P.aeruginosa, probably by modulating the UPR. Functionally, plays a role in the unconventional cytoplasmic splicing processing of its own mRNA triggered by the endoplasmic reticulum (ER) transmembrane endoribonuclease ire-1: upon ER stress, the emerging xbp-1 polypeptide chain, as part of a mRNA-ribosome-nascent chain (R-RNC) complex, cotranslationally recruits its own unprocessed mRNA through transient docking to the ER membrane and translational pausing, therefore facilitating efficient ire-1-mediated xbp-1 mRNA isoform 2 production. In terms of biological role, functions as a stress-inducible potent transcriptional activator during endoplasmic reticulum (ER) stress by inducing unfolded protein response (UPR) target genes via binding to the UPR element (UPRE). Plays a role in modulation of the UPR, lipid metabolism, proteostasis, and lifespan. In neurons, rescues stress resistance, increases longevity, and, drives expression of lysosomal genes in the intestine and activates the UPR in distal, non-neuronal cell types through a cell-nonautonomous mechanism. In neurons or intestine, plays a role in protection against proteotoxicity, acting via positive modulation of genes involved in lysosomal function, including lipases and the fatty-acid desaturase fat-6. Protection against proteotoxicity in neurons is dependent upon the transcription factor atf-6. This chain is X-box-binding protein 1, found in Caenorhabditis elegans.